A 54-amino-acid chain; its full sequence is UPF0391 membrane protein Bpet1858 (54 aa).

A run of 2 helical transmembrane segments spans residues 5-25 (AVVFFVIAIIAAVLGFGGIAA) and 27-47 (AAGIAKILFFVFLILALLSIL).

Belongs to the UPF0391 family.

Its subcellular location is the cell membrane. The chain is UPF0391 membrane protein Bpet1858 from Bordetella petrii (strain ATCC BAA-461 / DSM 12804 / CCUG 43448).